The chain runs to 102 residues: NADH-quinone oxidoreductase subunit K (102 aa).

The next 3 helical transmembrane spans lie at 6 to 26 (MEHGLLLAAVLFCIGLCGLLI), 30 to 50 (LLFILMSIEIMMNASALAFVV), and 65 to 85 (ILVISLAAAEASIGLALLLLL).

It belongs to the complex I subunit 4L family. NDH-1 is composed of 14 different subunits. Subunits NuoA, H, J, K, L, M, N constitute the membrane sector of the complex.

The protein resides in the cell inner membrane. The enzyme catalyses a quinone + NADH + 5 H(+)(in) = a quinol + NAD(+) + 4 H(+)(out). NDH-1 shuttles electrons from NADH, via FMN and iron-sulfur (Fe-S) centers, to quinones in the respiratory chain. The immediate electron acceptor for the enzyme in this species is believed to be ubiquinone. Couples the redox reaction to proton translocation (for every two electrons transferred, four hydrogen ions are translocated across the cytoplasmic membrane), and thus conserves the redox energy in a proton gradient. The sequence is that of NADH-quinone oxidoreductase subunit K from Aeromonas hydrophila subsp. hydrophila (strain ATCC 7966 / DSM 30187 / BCRC 13018 / CCUG 14551 / JCM 1027 / KCTC 2358 / NCIMB 9240 / NCTC 8049).